Consider the following 210-residue polypeptide: 3-hexulose-6-phosphate synthase (210 aa).

It belongs to the HPS/KGPDC family. HPS subfamily.

It catalyses the reaction D-ribulose 5-phosphate + formaldehyde = D-arabino-hex-3-ulose 6-phosphate. It functions in the pathway one-carbon metabolism; formaldehyde assimilation via RuMP pathway; D-fructose 6-phosphate from D-ribulose 5-phosphate and formaldehyde: step 1/2. In terms of biological role, catalyzes the condensation of ribulose 5-phosphate with formaldehyde to form 3-hexulose 6-phosphate. This is 3-hexulose-6-phosphate synthase from Staphylococcus aureus (strain NCTC 8325 / PS 47).